Reading from the N-terminus, the 217-residue chain is Probable lipoprotein CPn_0875/CP_0994/CPj0875/CpB0904 (217 aa).

A signal peptide spans Met1–Ser21. A lipid anchor (N-palmitoyl cysteine) is attached at Cys22. Cys22 carries the S-diacylglycerol cysteine lipid modification.

It belongs to the chlamydial CPn_0875/CT_734/TC_0107 family.

Its subcellular location is the cell membrane. The protein is Probable lipoprotein CPn_0875/CP_0994/CPj0875/CpB0904 of Chlamydia pneumoniae (Chlamydophila pneumoniae).